The primary structure comprises 261 residues: Imidazole glycerol phosphate synthase subunit HisF (261 aa).

Active-site residues include Asp-12 and Asp-131.

This sequence belongs to the HisA/HisF family. Heterodimer of HisH and HisF.

It is found in the cytoplasm. The enzyme catalyses 5-[(5-phospho-1-deoxy-D-ribulos-1-ylimino)methylamino]-1-(5-phospho-beta-D-ribosyl)imidazole-4-carboxamide + L-glutamine = D-erythro-1-(imidazol-4-yl)glycerol 3-phosphate + 5-amino-1-(5-phospho-beta-D-ribosyl)imidazole-4-carboxamide + L-glutamate + H(+). Its pathway is amino-acid biosynthesis; L-histidine biosynthesis; L-histidine from 5-phospho-alpha-D-ribose 1-diphosphate: step 5/9. Functionally, IGPS catalyzes the conversion of PRFAR and glutamine to IGP, AICAR and glutamate. The HisF subunit catalyzes the cyclization activity that produces IGP and AICAR from PRFAR using the ammonia provided by the HisH subunit. In Brucella melitensis biotype 2 (strain ATCC 23457), this protein is Imidazole glycerol phosphate synthase subunit HisF.